The sequence spans 558 residues: Phosphatidylserine lipase ABHD16A (558 aa).

2 helical membrane passes run 60–80 (ILAL…FAFF) and 93–113 (VVPF…VACL). The Cytoplasmic portion of the chain corresponds to 114–558 (RGIGRWTNPQ…AQNFQMPWHL (445 aa)). Residues 281 to 407 (LVICCEGNAG…LVTRTVRQHL (127 aa)) enclose the AB hydrolase-1 domain. Active-site charge relay system residues include Ser355, Asp430, and His507.

This sequence belongs to the AB hydrolase superfamily. ABHD16 family.

Its subcellular location is the membrane. The catalysed reaction is 1-heptadecanoyl-2-(5Z,8Z,11Z,14Z-eicosatetraenoyl)-sn-glycero-3-phosphoserine + H2O = 1-heptadecanoyl-sn-glycero-3-phosphoserine + (5Z,8Z,11Z,14Z)-eicosatetraenoate + H(+). It carries out the reaction 1-hexadecanoyl-2-(9Z-octadecenoyl)-sn-glycero-3-phospho-L-serine + H2O = 1-hexadecanoyl-sn-glycero-3-phospho-L-serine + (9Z)-octadecenoate + H(+). It catalyses the reaction 1-octadecanoyl-2-(9Z,12Z-octadecadienoyl)-sn-glycero-3-phosphoserine + H2O = 1-octadecanoyl-sn-glycero-3-phosphoserine + (9Z,12Z)-octadecadienoate + H(+). The enzyme catalyses 1-heptadecanoyl-2-(5Z,8Z,11Z,14Z-eicosatetraenoyl)-sn-glycero-3-phosphocholine + H2O = 1-heptadecanoyl-sn-glycero-3-phosphocholine + (5Z,8Z,11Z,14Z)-eicosatetraenoate + H(+). The catalysed reaction is 1-hexadecanoyl-2-(9Z-octadecenoyl)-sn-glycero-3-phosphoglycerol + H2O = 1-hexadecanoyl-sn-glycero-3-phosphoglycerol + (9Z)-octadecenoate + H(+). It carries out the reaction 1-hexadecanoyl-2-(9Z-octadecenoyl)-sn-glycero-3-phospho-(1D-myo-inositol) + H2O = 1-hexadecanoyl-sn-glycero-3-phospho-(1D-myo-inositol) + (9Z)-octadecenoate + H(+). It catalyses the reaction 1-heptadecanoyl-2-(5Z,8Z,11Z,14Z-eicosatetraenoyl)-sn-glycero-3-phosphoethanolamine + H2O = 1-heptadecanoyl-sn-glycero-3-phosphoethanolamine + (5Z,8Z,11Z,14Z)-eicosatetraenoate + H(+). The enzyme catalyses 1-hexadecanoyl-2-(9Z-octadecenoyl)-sn-glycero-3-phospho-(1'-sn-glycerol) + H2O = 1-hexadecanoyl-sn-glycero-3-phospho-(1'-sn-glycerol) + (9Z)-octadecenoate + H(+). The catalysed reaction is Hydrolyzes glycerol monoesters of long-chain fatty acids.. It carries out the reaction 1-tetradecanoylglycerol + H2O = tetradecanoate + glycerol + H(+). It catalyses the reaction 2-hexadecanoylglycerol + H2O = glycerol + hexadecanoate + H(+). The enzyme catalyses 1-(9Z-octadecenoyl)-glycerol + H2O = glycerol + (9Z)-octadecenoate + H(+). The catalysed reaction is 2-(9Z-octadecenoyl)-glycerol + H2O = glycerol + (9Z)-octadecenoate + H(+). It carries out the reaction 2-(9Z,12Z-octadecadienoyl)-glycerol + H2O = (9Z,12Z)-octadecadienoate + glycerol + H(+). It catalyses the reaction 1-(5Z,8Z,11Z,14Z-eicosatetraenoyl)-glycerol + H2O = glycerol + (5Z,8Z,11Z,14Z)-eicosatetraenoate + H(+). The enzyme catalyses 2-(5Z,8Z,11Z,14Z-eicosatetraenoyl)-glycerol + H2O = glycerol + (5Z,8Z,11Z,14Z)-eicosatetraenoate + H(+). The catalysed reaction is prostaglandin D2-1-glycerol ester + H2O = prostaglandin D2 + glycerol + H(+). It carries out the reaction 2-glyceryl-15-deoxy-Delta(12,14)-prostaglandin J2 + H2O = 15-deoxy-Delta(12,14)-prostaglandin J2 + glycerol + H(+). It catalyses the reaction 1-(9Z,12Z-octadecadienoyl)-glycerol + H2O = (9Z,12Z)-octadecadienoate + glycerol + H(+). Phosphatidylserine (PS) lipase that mediates the hydrolysis of phosphatidylserine to generate lysophosphatidylserine (LPS). LPS constitutes a class of signaling lipids that regulates immunological and neurological processes. Has no activity towards diacylglycerol, triacylglycerol or lysophosphatidylserine lipase. Also has monoacylglycerol lipase activity, with preference for 1-(9Z,12Z-octadecadienoyl)-glycerol (1-LG) and 2-glyceryl-15-deoxy-Delta(12,14)-prostaglandin J2 (15d-PGJ(2)-G). The sequence is that of Phosphatidylserine lipase ABHD16A from Pongo abelii (Sumatran orangutan).